An 853-amino-acid polypeptide reads, in one-letter code: ATP-dependent zinc metalloprotease FtsH (853 aa).

At Met-1–Lys-5 the chain is on the cytoplasmic side. The helical transmembrane segment at Tyr-6 to Phe-26 threads the bilayer. The Extracellular portion of the chain corresponds to Ser-27–Ser-113. The helical transmembrane segment at Phe-114–Phe-134 threads the bilayer. Topologically, residues Phe-135–Gly-853 are cytoplasmic. ATP is bound at residue Gly-205–Thr-212. His-427 serves as a coordination point for Zn(2+). Glu-428 is a catalytic residue. Positions 431 and 503 each coordinate Zn(2+). Composition is skewed to basic and acidic residues over residues Glu-619 to Val-632 and Ala-639 to Lys-648. The tract at residues Glu-619–Gly-853 is disordered. Positions Pro-677–Gly-695 are enriched in low complexity. 2 stretches are compositionally biased toward polar residues: residues Thr-728–Ser-739 and Met-770–Pro-788. The span at Leu-796 to Val-813 shows a compositional bias: basic and acidic residues.

In the central section; belongs to the AAA ATPase family. The protein in the C-terminal section; belongs to the peptidase M41 family. Homohexamer. Zn(2+) serves as cofactor.

It localises to the cell membrane. Acts as a processive, ATP-dependent zinc metallopeptidase for both cytoplasmic and membrane proteins. Plays a role in the quality control of integral membrane proteins. This chain is ATP-dependent zinc metalloprotease FtsH, found in Corynebacterium glutamicum (strain ATCC 13032 / DSM 20300 / JCM 1318 / BCRC 11384 / CCUG 27702 / LMG 3730 / NBRC 12168 / NCIMB 10025 / NRRL B-2784 / 534).